A 178-amino-acid polypeptide reads, in one-letter code: Translation initiation factor IF-3 (178 aa).

Residues 1-20 form a disordered region; it reads MRRPFRATPVQKDGPRSNRD.

The protein belongs to the IF-3 family. As to quaternary structure, monomer.

Its subcellular location is the cytoplasm. In terms of biological role, IF-3 binds to the 30S ribosomal subunit and shifts the equilibrium between 70S ribosomes and their 50S and 30S subunits in favor of the free subunits, thus enhancing the availability of 30S subunits on which protein synthesis initiation begins. The protein is Translation initiation factor IF-3 of Brucella anthropi (strain ATCC 49188 / DSM 6882 / CCUG 24695 / JCM 21032 / LMG 3331 / NBRC 15819 / NCTC 12168 / Alc 37) (Ochrobactrum anthropi).